We begin with the raw amino-acid sequence, 543 residues long: Reticulophagy regulator 2 (543 aa).

Transmembrane regions (helical) follow at residues 12–32, 100–120, and 204–224; these read AGGG…SLGM, SLRP…LDLW, and VPGI…PLVV. Residues 254–265 are compositionally biased toward basic residues; the sequence is LHHKHDKRKRQG. Positions 254-287 are disordered; sequence LHHKHDKRKRQGKNAPPGGDEPLAETESESEAEL. Over residues 275 to 285 the composition is skewed to acidic residues; it reads PLAETESESEA. The residue at position 279 (threonine 279) is a Phosphothreonine. Residues serine 281, serine 283, serine 291, and serine 311 each carry the phosphoserine modification. At threonine 334 the chain carries Phosphothreonine. Disordered regions lie at residues 336-394 and 411-486; these read VSED…DVAA and HFNG…EEEA. Phosphoserine occurs at positions 337, 344, 347, and 385. The span at 461–480 shows a compositional bias: pro residues; it reads APSPSILPPVPQDSPQPLPA. The LIR motif motif lies at 490–495; the sequence is EDFELL. Positions 504-543 are disordered; sequence NAELGLEPETPPKPPDAPPLGPDIHSLVQSDQEAQAVAEP. Positions 512-524 are enriched in pro residues; that stretch reads ETPPKPPDAPPLG.

It belongs to the RETREG family. As to quaternary structure, interacts with ATG8 family modifier proteins MAP1LC3A, MAP1LC3B, MAP1LC3C, GABARAP, GABARAPL1 and GABARAPL2. Shows higher affinity for GABARAPL1 than for MAP1LC3B. Interacts with CANX.

The protein resides in the endoplasmic reticulum membrane. Its function is as follows. Endoplasmic reticulum (ER)-anchored autophagy regulator which exists in an inactive state under basal conditions but is activated following cellular stress. When activated, induces ER fragmentation and mediates ER delivery into lysosomes through sequestration into autophagosomes via interaction with ATG8 family proteins. Required for collagen quality control in a LIR motif-independent manner. This Homo sapiens (Human) protein is Reticulophagy regulator 2.